We begin with the raw amino-acid sequence, 76 residues long: Putative defensin-like protein 121 (76 aa).

An N-terminal signal peptide occupies residues 1–26 (MTYKATILAIFMIILVLGIGTKETRG). Disulfide bonds link Cys-30/Cys-74, Cys-39/Cys-59, Cys-44/Cys-68, and Cys-48/Cys-70.

Belongs to the DEFL family.

It is found in the secreted. This is Putative defensin-like protein 121 (LCR55) from Arabidopsis thaliana (Mouse-ear cress).